Here is a 131-residue protein sequence, read N- to C-terminus: Profilin-2 (131 aa).

This sequence belongs to the profilin family. Occurs in many kinds of cells as a complex with monomeric actin in a 1:1 ratio.

The protein localises to the cytoplasm. It localises to the cytoskeleton. Its function is as follows. Binds to actin and affects the structure of the cytoskeleton. At high concentrations, profilin prevents the polymerization of actin, whereas it enhances it at low concentrations. By binding to PIP2, it inhibits the formation of IP3 and DG. In Ambrosia artemisiifolia (Common ragweed), this protein is Profilin-2.